The following is a 149-amino-acid chain: Aquaporin-like protein 2 (149 aa).

Residues Met1–Ser35 form a disordered region. At Met1–His47 the chain is on the cytoplasmic side. A helical membrane pass occupies residues Phe48–Ile68. Over Cys69–Gln89 the chain is Extracellular. A helical transmembrane segment spans residues Leu90–Trp110. The Cytoplasmic portion of the chain corresponds to Gly111–Arg149.

The protein belongs to the MIP/aquaporin (TC 1.A.8) family.

Its subcellular location is the endoplasmic reticulum membrane. The protein localises to the cell membrane. In terms of biological role, water channel required to facilitate the transport of water across membranes. Involved in freeze tolerance, osmotolerance and cell flocculation in liquid cultures. Is non-functional in most laboratory strains. In Saccharomyces cerevisiae (strain RM11-1a) (Baker's yeast), this protein is Aquaporin-like protein 2 (AQY2-2).